The sequence spans 135 residues: ATP synthase epsilon chain (135 aa).

The protein belongs to the ATPase epsilon chain family. F-type ATPases have 2 components, CF(1) - the catalytic core - and CF(0) - the membrane proton channel. CF(1) has five subunits: alpha(3), beta(3), gamma(1), delta(1), epsilon(1). CF(0) has three main subunits: a, b and c.

Its subcellular location is the cell inner membrane. Produces ATP from ADP in the presence of a proton gradient across the membrane. The polypeptide is ATP synthase epsilon chain (Desulforapulum autotrophicum (strain ATCC 43914 / DSM 3382 / VKM B-1955 / HRM2) (Desulfobacterium autotrophicum)).